The chain runs to 209 residues: Probable septum site-determining protein MinC (209 aa).

This sequence belongs to the MinC family. In terms of assembly, interacts with MinD and FtsZ.

Functionally, cell division inhibitor that blocks the formation of polar Z ring septums. Rapidly oscillates between the poles of the cell to destabilize FtsZ filaments that have formed before they mature into polar Z rings. Prevents FtsZ polymerization. This is Probable septum site-determining protein MinC from Clostridium kluyveri (strain NBRC 12016).